A 272-amino-acid chain; its full sequence is Phosphatidylglycerol--prolipoprotein diacylglyceryl transferase (272 aa).

The next 4 helical transmembrane spans lie at 15 to 35 (LGPL…LVLF), 53 to 73 (AFAV…WHVV), 94 to 114 (GLGF…IAKI), and 117 to 137 (VPPF…LCFA). Position 138 (R138) interacts with a 1,2-diacyl-sn-glycero-3-phospho-(1'-sn-glycerol). 3 consecutive transmembrane segments (helical) span residues 174 to 194 (FHPI…ILLV), 199 to 219 (VFVK…VLYG), and 237 to 257 (FGLD…VLIA).

It belongs to the Lgt family.

It is found in the cell membrane. The catalysed reaction is L-cysteinyl-[prolipoprotein] + a 1,2-diacyl-sn-glycero-3-phospho-(1'-sn-glycerol) = an S-1,2-diacyl-sn-glyceryl-L-cysteinyl-[prolipoprotein] + sn-glycerol 1-phosphate + H(+). The protein operates within protein modification; lipoprotein biosynthesis (diacylglyceryl transfer). Catalyzes the transfer of the diacylglyceryl group from phosphatidylglycerol to the sulfhydryl group of the N-terminal cysteine of a prolipoprotein, the first step in the formation of mature lipoproteins. The protein is Phosphatidylglycerol--prolipoprotein diacylglyceryl transferase of Tropheryma whipplei (strain TW08/27) (Whipple's bacillus).